The following is a 53-amino-acid chain: Small polypeptide DEVIL 16 (53 aa).

Asn-6 is a glycosylation site (N-linked (GlcNAc...) asparagine). Residues 14–45 are required for DVL/RTFL small polypeptide activity; that stretch reads TFGQKCSHVVKKQRAKFYILRRCIAMLVCWHD. A helical membrane pass occupies residues 30–46; that stretch reads FYILRRCIAMLVCWHDQ.

This sequence belongs to the DVL/RTFL small polypeptides family. In terms of tissue distribution, mostly expressed in stems, flower buds, flowers and seedling shoots, to a lesser extent, in roots and young cauline leaves, but not in mature rosette leaves. Barely observed in cotyledons and leaf primordia.

The protein localises to the cell membrane. Its function is as follows. Small polypeptide acting as a regulatory molecule which coordinates cellular responses required for differentiation, growth and development, probably by restricting polar cell proliferation in lateral organs (e.g. leaves) and coordinating socket cell recruitment and differentiation at trichome sites. Regulates the positional cue and cell proliferation along the body axis. In Arabidopsis thaliana (Mouse-ear cress), this protein is Small polypeptide DEVIL 16.